We begin with the raw amino-acid sequence, 312 residues long: Acetaldehyde dehydrogenase (312 aa).

11 to 14 (SGNI) provides a ligand contact to NAD(+). Residue Cys129 is the Acyl-thioester intermediate of the active site. Residues 160–168 (SAGPGTRAN) and Asn287 contribute to the NAD(+) site.

Belongs to the acetaldehyde dehydrogenase family.

It carries out the reaction acetaldehyde + NAD(+) + CoA = acetyl-CoA + NADH + H(+). The chain is Acetaldehyde dehydrogenase (xylQ) from Sphingobium yanoikuyae (Sphingomonas yanoikuyae).